The following is a 397-amino-acid chain: Probable sugar efflux transporter (397 aa).

The next 12 membrane-spanning stretches (helical) occupy residues 15 to 35, 51 to 71, 81 to 101, 103 to 123, 136 to 156, 170 to 190, 209 to 229, 246 to 266, 273 to 293, 301 to 321, 333 to 353, and 364 to 384; these read VVTLAIAAFIFNTTEFVPVGL, GIMLTIYAWVVALMSLPFMLL, LICLFVLFIASHILSFMAWSF, VLVISRIGVAFAHAIFWSITA, AQALSLLATGTALAMVLGLPV, FLAIGVGAFLTLLCLIKLLPL, PALMSIYLLTVVVVTAHYTAY, FATVLLLILGGAGIIGSVIFG, ASVLVSVAIALLMACLLLLMP, LAILSIFWGIAIMMIGLGMQV, VAMSLFSGIFNIGIGAGALVG, and DIGYVGAIPAFLALVWSVIIF.

The protein belongs to the major facilitator superfamily. SotB (TC 2.A.1.2) family.

It is found in the cell inner membrane. In terms of biological role, involved in the efflux of sugars. The physiological role may be the reduction of the intracellular concentration of toxic sugars or sugar metabolites. The sequence is that of Probable sugar efflux transporter from Escherichia fergusonii (strain ATCC 35469 / DSM 13698 / CCUG 18766 / IAM 14443 / JCM 21226 / LMG 7866 / NBRC 102419 / NCTC 12128 / CDC 0568-73).